The sequence spans 2193 residues: Non-reducing polyketide synthase esdpA (2193 aa).

Positions 90-252 (NVLLAPLTVL…AKVQVNGRYH (163 aa)) constitute a Starter acyltransferase (SAT) domain. A Ketosynthase family 3 (KS3) domain is found at 381-797 (DECVAIVGAA…GNNTVIIVCE (417 aa)). Residues C546, H682, and H720 each act as for beta-ketoacyl synthase activity in the active site. In terms of domain architecture, Malonyl-CoA:ACP transacylase (MAT) spans 906–1158 (VFSGQSGMTV…YFVDAVRRIK (253 aa)). The active-site For acyl/malonyl transferase activity is S992. The interval 1265–1392 (PPMLSLENFS…GRVVLEDRRR (128 aa)) is N-terminal hotdog fold. The PKS/mFAS DH domain maps to 1265 to 1569 (PPMLSLENFS…FVKISSHILQ (305 aa)). The interval 1419–1569 (VFSASGSIAY…FVKISSHILQ (151 aa)) is C-terminal hotdog fold. D1479 serves as the catalytic Proton donor; for dehydratase activity. The region spanning 1723-1799 (RILSDSMIKL…ELHDLMQSHP (77 aa)) is the Carrier domain. S1759 carries the post-translational modification O-(pantetheine 4'-phosphoryl)serine. The tract at residues 1944–2177 (YHGSEHKLLR…GFTHVDWSND (234 aa)) is methyltransferase (CMeT) domain.

Pantetheine 4'-phosphate serves as cofactor.

Its pathway is secondary metabolite biosynthesis; terpenoid biosynthesis. Functionally, non-reducing polyketide synthase; part of the cluster that mediates the biosynthesis of shearones, diterpenoid pyrones (DPs) which are structurally diverse meroterpenoids consisting of a diterpene linked by a pyrone, and which may exhibit a range of bioactivities. Whitin the pathway, esdpA takes part to the biosynthesis of the molecular scaffold via the production of the alpha-pyrone from one molecule of acetyl-CoA, two molecules of malonyl-CoA and one molecule of S-adenosyl-L-methionine (SAM). The molecular scaffold is commonly biosynthesized by a series of enzymes including the non-reducing polyketide synthase (NR-PKS) esdpA that generates an alpha-pyrone; the prenyltransferase esdpC that attaches a geranylgeranyl pyrophosphate (GGPP) produced by the GGPP synthase (GGPPS) esdpD onto the pyrone unit; the FAD-dependent monooxygenase esdpE that converts an olefin on the diterpene unit into an epoxide; and the terpene cyclase esdpB that catalyzes the cyclization reactions to give the molecular backbone shearone A. In the modification steps, esdpF oxidizes the hydroxy group to a ketone at C-3 and esdpG then attaches hydroxy groups at both C-11 and C-12. After that, esdpI hydroxylates at C-20 and esdpH hydroxylates at C-6'. The ether bridge is generated by nucleophilic attack of the hydroxy group at C-20 to the carbonyl carbon at C-3. EsdpH can also functions prior to esdpI. The different combinations of these modification enzymes lead to the production of diverse shearone derivatives, shearone I being the end product of the pathway. The alpha-ketoglutarate-dependent dioxygenase esdpJ seems not to be involved in this pathway. In Penicillium shearii (Eupenicillium shearii), this protein is Non-reducing polyketide synthase esdpA.